The chain runs to 156 residues: Ribosomal RNA large subunit methyltransferase H (156 aa).

Residues Leu-73, Gly-104, and 123–128 (LSALTL) contribute to the S-adenosyl-L-methionine site.

It belongs to the RNA methyltransferase RlmH family. As to quaternary structure, homodimer.

The protein resides in the cytoplasm. It catalyses the reaction pseudouridine(1915) in 23S rRNA + S-adenosyl-L-methionine = N(3)-methylpseudouridine(1915) in 23S rRNA + S-adenosyl-L-homocysteine + H(+). Functionally, specifically methylates the pseudouridine at position 1915 (m3Psi1915) in 23S rRNA. The chain is Ribosomal RNA large subunit methyltransferase H from Shewanella frigidimarina (strain NCIMB 400).